Reading from the N-terminus, the 560-residue chain is MSQRKLQQDIDKLLKKVKEGIEDFDDIYEKFQSTDPSNSSHREKLESDLKREIKKLQKHRDQIKTWLSKEDVKDKQSVLMTNRRLIENGMERFKSVEKLMKTKQFSKEALTNPDIIKDPKELKKRDQVLFIHDCLDELQKQLEQYEAQENEEQTERHEFHIANLENILKKLQNNEMDPEPVEEFQDDIKYYVENNDDPDFIEYDTIYEDMGCEIQPSSSNNEAPKEGNNQTSLSSIRSSKKQERSPKKKAPQRDVSISDRATTPIAPGVESASQSISSTPTPVSTDTPLHTVKDDSIKFDNSTLGTPTTHVSMKKKESENDSEQQLNFPPDRTDEIRKTIQHDVETNAAFQNPLFNDELKYWLDSKRYLMQPLQEMSPKMVSQLESSLLNCPDSLDADSPCLYTKPLSLPHPTSIFFPNEPIRFVYPYDVPLNLTNNENDTDNKFGKDSKAKSKKDDDIYSRTSLARIFMKFDLDTLFFIFYHYQGSYEQFLAARELFKNRNWLFNKVDRCWYYKEIEKLPPGMGKSEEESWRYFDYKKSWLARRCGNDFVYNEEDFEKL.

3 coiled-coil regions span residues 3–26 (QRKLQQDIDKLLKKVKEGIEDFDD), 37–71 (SNSSHREKLESDLKREIKKLQKHRDQIKTWLSKED), and 124–177 (KRDQ…NEMD). The interval 212-330 (CEIQPSSSNN…DSEQQLNFPP (119 aa)) is disordered. Residues 215-237 (QPSSSNNEAPKEGNNQTSLSSIR) are compositionally biased toward polar residues. A compositionally biased stretch (low complexity) spans 273 to 288 (SQSISSTPTPVSTDTP). The span at 299–311 (FDNSTLGTPTTHV) shows a compositional bias: polar residues. Phosphothreonine is present on Thr306. Lys338 participates in a covalent cross-link: Glycyl lysine isopeptide (Lys-Gly) (interchain with G-Cter in ubiquitin). Residue Ser377 is modified to Phosphoserine.

Belongs to the CNOT2/3/5 family. As to quaternary structure, forms a NOT protein complex that comprises NOT1, NOT2, NOT3, NOT4 and NOT5. Subunit of the 1.0 MDa CCR4-NOT core complex that contains CCR4, CAF1, NOT1, NOT2, NOT3, NOT4, NOT5, CAF40 and CAF130. In the complex interacts with NOT1 and NOT2. The core complex probably is part of a less characterized 1.9 MDa CCR4-NOT complex.

The protein localises to the cytoplasm. Its subcellular location is the nucleus. In terms of biological role, acts as a component of the CCR4-NOT core complex, which in the nucleus seems to be a general transcription factor, and in the cytoplasm the major mRNA deadenylase involved in mRNA turnover. The NOT protein subcomplex negatively regulates the basal and activated transcription of many genes. Preferentially affects TC-type TATA element-dependent transcription. Could directly or indirectly inhibit component(s) of the general transcription machinery. This chain is General negative regulator of transcription subunit 5 (NOT5), found in Saccharomyces cerevisiae (strain ATCC 204508 / S288c) (Baker's yeast).